A 518-amino-acid polypeptide reads, in one-letter code: Chromosomal replication initiator protein DnaA (518 aa).

The tract at residues 1–72 is domain I, interacts with DnaA modulators; sequence MTLAEFWPLC…VREELAAGRS (72 aa). The domain II stretch occupies residues 72–180; that stretch reads SAFVFKPGEG…DAEEARYEQT (109 aa). Residues 145–172 are disordered; sequence EPRQAAGSASRPESVAVAKARTDVQRDA. The tract at residues 181-397 is domain III, AAA+ region; that stretch reads NLSPDYTFDT…GAFNRVGASS (217 aa). Gly-225, Gly-227, Lys-228, and Thr-229 together coordinate ATP. The segment at 398 to 518 is domain IV, binds dsDNA; the sequence is RFMNRPVIDI…YEKLLILIQN (121 aa).

Belongs to the DnaA family. As to quaternary structure, oligomerizes as a right-handed, spiral filament on DNA at oriC.

The protein resides in the cytoplasm. Plays an essential role in the initiation and regulation of chromosomal replication. ATP-DnaA binds to the origin of replication (oriC) to initiate formation of the DNA replication initiation complex once per cell cycle. Binds the DnaA box (a 9 base pair repeat at the origin) and separates the double-stranded (ds)DNA. Forms a right-handed helical filament on oriC DNA; dsDNA binds to the exterior of the filament while single-stranded (ss)DNA is stabiized in the filament's interior. The ATP-DnaA-oriC complex binds and stabilizes one strand of the AT-rich DNA unwinding element (DUE), permitting loading of DNA polymerase. After initiation quickly degrades to an ADP-DnaA complex that is not apt for DNA replication. Binds acidic phospholipids. This is Chromosomal replication initiator protein DnaA from Neisseria meningitidis serogroup B (strain ATCC BAA-335 / MC58).